The primary structure comprises 184 residues: Alpha-tubulin N-acetyltransferase (184 aa).

The 174-residue stretch at 1–174 folds into the N-acetyltransferase domain; the sequence is MDTHGEKMKN…NNFVIFAEYF (174 aa). Residues 108-121 and 144-153 each bind acetyl-CoA; these read FYIR…GLGL and SHKLRSFLKK.

It belongs to the acetyltransferase ATAT1 family.

The catalysed reaction is L-lysyl-[alpha-tubulin] + acetyl-CoA = N(6)-acetyl-L-lysyl-[alpha-tubulin] + CoA + H(+). In terms of biological role, specifically acetylates 'Lys-40' in alpha-tubulin on the lumenal side of microtubules. Promotes microtubule destabilization and accelerates microtubule dynamics; this activity may be independent of acetylation activity. Acetylates alpha-tubulin with a slow enzymatic rate, due to a catalytic site that is not optimized for acetyl transfer. Enters the microtubule through each end and diffuses quickly throughout the lumen of microtubules. Acetylates only long/old microtubules because of its slow acetylation rate since it does not have time to act on dynamically unstable microtubules before the enzyme is released. This Plasmodium vivax (strain Salvador I) protein is Alpha-tubulin N-acetyltransferase.